The following is a 228-amino-acid chain: N-acetyltransferase family 8 member 3 (228 aa).

2 helical membrane-spanning segments follow: residues 36 to 56 (MLLL…LFLA) and 58 to 78 (GSWL…WLLA). The N-acetyltransferase domain maps to 61 to 217 (LLVLLSTLTL…RNSPMICLKY (157 aa)).

Belongs to the camello family.

The protein localises to the nucleus membrane. It is found in the cytoplasm. Its subcellular location is the perinuclear region. It carries out the reaction L-lysyl-[protein] + acetyl-CoA = N(6)-acetyl-L-lysyl-[protein] + CoA + H(+). Functionally, has histone acetyltransferase activity in vitro, with specificity for histone H4. The protein is N-acetyltransferase family 8 member 3 of Rattus norvegicus (Rat).